Consider the following 64-residue polypeptide: Large ribosomal subunit protein eL37 (64 aa).

4 residues coordinate Zn(2+): Cys-20, Cys-23, Cys-35, and Cys-38. A C4-type zinc finger spans residues 20–38 (CRRCGRRAFHVRKKVCAAC).

It belongs to the eukaryotic ribosomal protein eL37 family. It depends on Zn(2+) as a cofactor.

Its function is as follows. Binds to the 23S rRNA. This chain is Large ribosomal subunit protein eL37, found in Methanococcus maripaludis (strain C6 / ATCC BAA-1332).